Consider the following 91-residue polypeptide: Transcription factor znf27 (91 aa).

Its subcellular location is the nucleus. Its function is as follows. Transcription factor; part of the gene cluster 27 that mediates the biosynthesis of asparasone A, a sclerotium-specific anthraquinone pigment important for sclerotial survival. Controls the expression of the non-reducing polyketide synthase (NRPKS) pks27. The sequence is that of Transcription factor znf27 from Aspergillus flavus (strain ATCC 200026 / FGSC A1120 / IAM 13836 / NRRL 3357 / JCM 12722 / SRRC 167).